Consider the following 505-residue polypeptide: Apolipoprotein N-acyltransferase (505 aa).

6 helical membrane passes run 23–43 (LLAL…AVLY), 58–78 (GWWF…VSMN), 85–105 (PLLA…FFAL), 125–145 (LCFA…LTGF), 162–182 (LAPL…AALL), and 192–212 (PSFL…GLAL). Positions 230–469 (IQGNVEQDLK…QAVLYGEVVP (240 aa)) constitute a CN hydrolase domain. Glu269 (proton acceptor) is an active-site residue. Lys329 is an active-site residue. Cys381 (nucleophile) is an active-site residue. A helical transmembrane segment spans residues 482-502 (WPLAIVCALLLGWALLAGRIA).

It belongs to the CN hydrolase family. Apolipoprotein N-acyltransferase subfamily.

It is found in the cell inner membrane. It carries out the reaction N-terminal S-1,2-diacyl-sn-glyceryl-L-cysteinyl-[lipoprotein] + a glycerophospholipid = N-acyl-S-1,2-diacyl-sn-glyceryl-L-cysteinyl-[lipoprotein] + a 2-acyl-sn-glycero-3-phospholipid + H(+). It functions in the pathway protein modification; lipoprotein biosynthesis (N-acyl transfer). Its function is as follows. Catalyzes the phospholipid dependent N-acylation of the N-terminal cysteine of apolipoprotein, the last step in lipoprotein maturation. This Pseudomonas putida (strain ATCC 47054 / DSM 6125 / CFBP 8728 / NCIMB 11950 / KT2440) protein is Apolipoprotein N-acyltransferase.